Consider the following 904-residue polypeptide: UPF0182 protein CKL_0015 (904 aa).

7 helical membrane-spanning segments follow: residues 9–29 (SLIV…DFII), 47–67 (LIAI…SIVL), 96–116 (IFII…AATY), 157–177 (ILSL…TLSV), 208–228 (LAVL…LKCI), 253–273 (YKII…SILV), and 279–299 (IIVS…SYTV).

It belongs to the UPF0182 family.

It localises to the cell membrane. The chain is UPF0182 protein CKL_0015 from Clostridium kluyveri (strain ATCC 8527 / DSM 555 / NBRC 12016 / NCIMB 10680 / K1).